We begin with the raw amino-acid sequence, 511 residues long: MYTPHPFGFLIILVPMTNAMRAIAAIAAGVGSVAATVATSTTSSISSSTTIINTSSATTIGGNHTSGSTGFSTNSTLLDADHLPLQLTTAKVDLDIEIDIQLLTNGYDGTTLTSFYNESSWTNASEMDTIVGEEPEPLSLVSIVVVGIFLSVLIFLSVAGNILVCLAIYTERSLRRIGNLFLASLAIADLFVASLVMTFAGVNDLLGYWIFGAQFCDTWVAFDVMCSTASILNLCAISMDRYIHIKDPLRYGRWVTRRVAVITIAAIWLLAAFVSFVPISLGIHRPDQPLIFEDNGKKYPTCALDLTPTYAVVSSCISFYFPCVVMIGIYCRLYCYAQKHVKSIKAVTRPGEVAEKQRYKSIRRPKNQPKKFKVRNLHTHSSPYHVSDHKAAVTVGVIMGVFLICWVPFFCVNITAAFCKTCIGGQTFKILTWLGYSNSAFNPIIYSIFNKEFRDAFKRILTMRNPWCCAQDVGNIHPRNSDRFITDYAAKNVVVMNSGRSSAELEQVSAI.

The signal sequence occupies residues 1–19; it reads MYTPHPFGFLIILVPMTNA. Over 20 to 142 the chain is Extracellular; that stretch reads MRAIAAIAAG…EEPEPLSLVS (123 aa). 5 N-linked (GlcNAc...) asparagine glycosylation sites follow: N53, N63, N74, N117, and N123. Residues 143–169 traverse the membrane as a helical segment; sequence IVVVGIFLSVLIFLSVAGNILVCLAIY. Residues 170-179 lie on the Cytoplasmic side of the membrane; it reads TERSLRRIGN. A helical transmembrane segment spans residues 180–206; sequence LFLASLAIADLFVASLVMTFAGVNDLL. The Extracellular segment spans residues 207-216; sequence GYWIFGAQFC. Cysteines 216 and 302 form a disulfide. The helical transmembrane segment at 217-239 threads the bilayer; sequence DTWVAFDVMCSTASILNLCAISM. Topologically, residues 240–258 are cytoplasmic; sequence DRYIHIKDPLRYGRWVTRR. Residues 259–279 traverse the membrane as a helical segment; that stretch reads VAVITIAAIWLLAAFVSFVPI. Over 280–310 the chain is Extracellular; sequence SLGIHRPDQPLIFEDNGKKYPTCALDLTPTY. Residues 311–331 traverse the membrane as a helical segment; that stretch reads AVVSSCISFYFPCVVMIGIYC. Residues 332–391 are Cytoplasmic-facing; the sequence is RLYCYAQKHVKSIKAVTRPGEVAEKQRYKSIRRPKNQPKKFKVRNLHTHSSPYHVSDHKA. The chain crosses the membrane as a helical span at residues 392–412; the sequence is AVTVGVIMGVFLICWVPFFCV. Over 413 to 427 the chain is Extracellular; sequence NITAAFCKTCIGGQT. A helical transmembrane segment spans residues 428-450; it reads FKILTWLGYSNSAFNPIIYSIFN. At 451 to 511 the chain is on the cytoplasmic side; sequence KEFRDAFKRI…SAELEQVSAI (61 aa). 2 S-palmitoyl cysteine lipidation sites follow: C468 and C469.

It belongs to the G-protein coupled receptor 1 family. In terms of tissue distribution, expressed in the larval and adult CNS in structures that mediate higher-order brain functions such as learning, memory and motor control: in the mushroom body neuropil and four unpaired neurons in each thoracic segment. The adult CNS has intense expression in the central complex, moderate expression in several neurosecretory cells, and weak expression in two unpaired neurons in the mesothoracic neuromere. Also seen in the somata of the optic lobes.

It localises to the cell membrane. In terms of biological role, receptor for dopamine. The activity of this receptor is mediated by G proteins which activate adenylyl cyclase. Might be involved in the processing of visual information and/or visual learning. Important for Pavlovian conditioning: required in the mushroom body as a receptor conveying unconditional stimuli information, has a role in memory formation for aversive and appetitive learning. Sleep-deprivation-induced impairments in learning can be partially explained through alterations in dopamine signaling, Dop1R1 expression levels are reduced; sleep may have a role in restoring dopamine homeostasis. The protein is Dopamine receptor 1 (Dop1R1) of Drosophila melanogaster (Fruit fly).